A 305-amino-acid chain; its full sequence is MIRQRTLKEIVKTTGVGLHSGRKVTLTLRPAAANTGIIYRRTDVNPPVDFPADPASVRDTMLCTALVNDEGVRISTVEHLNAALAGMGIDNIIVEVDAPEIPIMDGSASPFVYLLQQAGIETQNVPKRFIRIKKPVRFEDGDKWAEFVPFNGFRMDFEIEFNHPAIESDEQRLLFDFSSQGFVREISRARTFGFMRDIEYLQSQNLVLGGSFDNAIVLDDYRILNEEGLRFDNEFVTHKLLDAIGDLYMCGHAIIGEFRAFKSGHGLNNQLLRAVLADQEAWEWTTFEEEEGSPVAFAQPNMVLA.

Residues H79, H238, and D242 each coordinate Zn(2+). The active-site Proton donor is H265.

This sequence belongs to the LpxC family. Zn(2+) is required as a cofactor.

It carries out the reaction a UDP-3-O-[(3R)-3-hydroxyacyl]-N-acetyl-alpha-D-glucosamine + H2O = a UDP-3-O-[(3R)-3-hydroxyacyl]-alpha-D-glucosamine + acetate. It functions in the pathway glycolipid biosynthesis; lipid IV(A) biosynthesis; lipid IV(A) from (3R)-3-hydroxytetradecanoyl-[acyl-carrier-protein] and UDP-N-acetyl-alpha-D-glucosamine: step 2/6. In terms of biological role, catalyzes the hydrolysis of UDP-3-O-myristoyl-N-acetylglucosamine to form UDP-3-O-myristoylglucosamine and acetate, the committed step in lipid A biosynthesis. This Vibrio campbellii (strain ATCC BAA-1116) protein is UDP-3-O-acyl-N-acetylglucosamine deacetylase.